The primary structure comprises 336 residues: MGRGKKMSKPGDGRSGDVPDTGRTGGTNENHPKINGEVAHLGQPKIYSFMSPTKSPSARPPLQEENSVAHHESKCPGKPLTETRKKAEVEKKRISSGTELSVKPSEQRETECNSIGEFLDPKQEQTDVRRNIALPPADKLNHQKMVKDKPLRRKAQRKKSPNRKLTDYYPVRRSCRKSKTELESEEKKRIDELIQTGKEEGMKMDMITGKGRGVIATRDFQRGEFVVEYHGDLIEITDAKRREATYAQDSNTGCYMYYFQYLNKTYCIDATRETGRLGRLINHSKSGNCHTKLHNINNVPHLILVASRDINVGEELLYDYGDRRKSSLEAHPWLKN.

Positions 1–112 (MGRGKKMSKP…KPSEQRETEC (112 aa)) are disordered. The span at 67-93 (SVAHHESKCPGKPLTETRKKAEVEKKR) shows a compositional bias: basic and acidic residues. Positions 200–321 (EGMKMDMITG…VGEELLYDYG (122 aa)) constitute an SET domain. S-adenosyl-L-methionine contacts are provided by residues 210 to 212 (KGR), tyrosine 255, and 282 to 283 (NH).

This sequence belongs to the class V-like SAM-binding methyltransferase superfamily. Histone-lysine methyltransferase family. PR/SET subfamily.

It localises to the nucleus. It is found in the chromosome. The enzyme catalyses L-lysyl(20)-[histone H4] + S-adenosyl-L-methionine = N(6)-methyl-L-lysyl(20)-[histone H4] + S-adenosyl-L-homocysteine + H(+). It carries out the reaction L-lysyl-[protein] + S-adenosyl-L-methionine = N(6)-methyl-L-lysyl-[protein] + S-adenosyl-L-homocysteine + H(+). Protein-lysine N-methyltransferase that monomethylates both histones and non-histone proteins. Specifically monomethylates 'Lys-20' of histone H4 (H4K20me1). H4K20me1 is enriched during mitosis and represents a specific tag for epigenetic transcriptional repression. Mainly functions in euchromatin regions, thereby playing a central role in the silencing of euchromatic genes. Required for cell proliferation, probably by contributing to the maintenance of proper higher-order structure of DNA during mitosis. Involved in chromosome condensation and proper cytokinesis. Nucleosomes are preferred as substrate compared to free histones. Mediates monomethylation of p53/TP53 at 'Lys-382', leading to repress p53/TP53-target genes. Plays a negative role in TGF-beta response regulation and a positive role in cell migration. This is N-lysine methyltransferase KMT5A from Xenopus tropicalis (Western clawed frog).